A 380-amino-acid polypeptide reads, in one-letter code: Cytochrome b (380 aa).

A run of 4 helical transmembrane segments spans residues 33 to 53 (FGSLLGLCLITQVLTGLFLAM), 77 to 98 (WLLRNIHANGASFFFICIYLHI), 113 to 133 (WNIGVLLLLLVMMTAFVGYVL), and 178 to 198 (FFTFHFLLPFIIMGATMLHLL). The heme b site is built by histidine 83 and histidine 97. Residues histidine 182 and histidine 196 each coordinate heme b. Position 201 (histidine 201) interacts with a ubiquinone. The next 4 helical transmembrane spans lie at 226 to 246 (YKDLLGFTILLAILSALALLN), 288 to 308 (LGGVLALLLSILILVVVPVLH), 320 to 340 (PSQTLFWILVANMLVLTWIGG), and 347 to 367 (FIIIGQIASVLYFMLFLILIP).

The protein belongs to the cytochrome b family. In terms of assembly, the cytochrome bc1 complex contains 3 respiratory subunits (MT-CYB, CYC1 and UQCRFS1), 2 core proteins (UQCRC1 and UQCRC2) and probably 6 low-molecular weight proteins. Heme b serves as cofactor.

The protein resides in the mitochondrion inner membrane. Component of the ubiquinol-cytochrome c reductase complex (complex III or cytochrome b-c1 complex) that is part of the mitochondrial respiratory chain. The b-c1 complex mediates electron transfer from ubiquinol to cytochrome c. Contributes to the generation of a proton gradient across the mitochondrial membrane that is then used for ATP synthesis. The chain is Cytochrome b (mt-cyb) from Atractosteus spatula (Alligator gar).